A 440-amino-acid polypeptide reads, in one-letter code: L-gulonolactone oxidase (440 aa).

The FAD-binding PCMH-type domain maps to 17-187 (YGCSPEMYYQ…LTVTLQCVPQ (171 aa)). H54 bears the Pros-8alpha-FAD histidine mark. A helical membrane pass occupies residues 251 to 273 (IGFYLLEFLLWTSTYLPRLVGWI).

This sequence belongs to the oxygen-dependent FAD-linked oxidoreductase family. The cofactor is FAD. In terms of tissue distribution, highly expressed in liver.

It is found in the microsome membrane. Its subcellular location is the endoplasmic reticulum membrane. The catalysed reaction is L-gulono-1,4-lactone + O2 = L-ascorbate + H2O2 + H(+). It functions in the pathway cofactor biosynthesis; L-ascorbate biosynthesis via UDP-alpha-D-glucuronate pathway; L-ascorbate from UDP-alpha-D-glucuronate: step 4/4. Oxidizes L-gulono-1,4-lactone to hydrogen peroxide and L-xylo-hexulonolactone which spontaneously isomerizes to L-ascorbate. The polypeptide is L-gulonolactone oxidase (Gulo) (Mus musculus (Mouse)).